The primary structure comprises 79 residues: Small ribosomal subunit protein bS16 (79 aa).

Belongs to the bacterial ribosomal protein bS16 family.

This chain is Small ribosomal subunit protein bS16, found in Hahella chejuensis (strain KCTC 2396).